The primary structure comprises 555 residues: Urocanate hydratase (555 aa).

NAD(+) is bound by residues 51 to 52 (GG), glutamine 129, 175 to 177 (GMG), glutamate 195, 262 to 266 (QTSAH), 272 to 273 (YL), and tyrosine 321. Cysteine 409 is an active-site residue. Residue glycine 491 participates in NAD(+) binding.

Belongs to the urocanase family. NAD(+) is required as a cofactor.

It localises to the cytoplasm. It catalyses the reaction 4-imidazolone-5-propanoate = trans-urocanate + H2O. It functions in the pathway amino-acid degradation; L-histidine degradation into L-glutamate; N-formimidoyl-L-glutamate from L-histidine: step 2/3. Its function is as follows. Catalyzes the conversion of urocanate to 4-imidazolone-5-propionate. This Xanthomonas axonopodis pv. citri (strain 306) protein is Urocanate hydratase.